The primary structure comprises 374 residues: MSFHVNNKAVGDPLNSEDWRIKGYNPLTPPNLLQSEIPQTAKSRDTVFKAREEVIAIFQNKDAQKRLLVVIGPCSIHDPLAALEYCDRLMKLKEKYQDDLLIVMRSYLEKPRTTIGWKGLINDPDIDNSFKINKGLRISRQLFADLTEKGMPLASEMLDTISPQFLADMFSVGVIGARTTESQLHRELASGLSFPVGFKNGTDGTLDVAIDAIDSAKYPHHFLSVTKPGVVAIVGTIGNHDCFIILRGGRKGTNYDAKSIKEAREKLESEGMNPRLMIDCSHGNSEKNHMNQPKVVHAVAEQIEAGETAVIGVMIESNLKAGTQKVPKEGKAGLEYGMSITDACIDWKTTETVLAELAGAVAKRRTLLGQNGTY.

This sequence belongs to the class-I DAHP synthase family.

The catalysed reaction is D-erythrose 4-phosphate + phosphoenolpyruvate + H2O = 7-phospho-2-dehydro-3-deoxy-D-arabino-heptonate + phosphate. It participates in mycotoxin biosynthesis. Its function is as follows. Nonribosomal peptide synthetase; part of the gene clusters that mediate the biosynthesis of AM-toxins, host-selective toxins (HSTs) causing Alternaria blotch on apple, a worldwide distributed disease. AM-toxins are cyclic depsipeptides containing the 3 residues 2-hydroxy-isovaleric acid (2-HIV), dehydroalanine, L-alanine which are common for all 3 AM-toxins I to III. The fourth precursor is L-alpha-amino-methoxyphenyl-valeric acid (L-Amv) for AM-toxin I, L-alpha-amino-phenyl-valeric acid (L-Apv) for AM-toxin II, and L-alpha-amino-hydroxyphenyl-valeric acid (L-Ahv) for AM-toxin III. AM-toxins have two target sites for affecting susceptible apple cells; they cause invagination of the plasma membrane and electrolyte loss and chloroplast disorganization. The non-ribosomal peptide synthetase AMT1 contains 4 catalytic modules and is responsible for activation of each residue in AM-toxin. The aldo-keto reductase AMT2 catalyzes the conversion of 2-keto-isovaleric acid (2-KIV) to 2-hydroxy-isovaleric acid (2-HIV), one of the precursor residues incorporated by AMT1 during AM-toxin biosynthesis, by reduction of its ketone to an alcohol. The cytochrome P450 monooxygenase AMT3 and the thioesterase AMT4 are also important for AM-toxin production, but their exact function within the AM-toxin biosynthesis are not known yet. Up to 21 proteins (including AMT1 to AMT4) are predicted to be involved in AM-toxin biosynthesis since their expression ishighly up-regulated in AM-toxin-producing cultures. This chain is Phospho-2-dehydro-3-deoxyheptonate aldolase AMT16, found in Alternaria alternata (Alternaria rot fungus).